Here is a 91-residue protein sequence, read N- to C-terminus: Large ribosomal subunit protein uL23c (91 aa).

Belongs to the universal ribosomal protein uL23 family. As to quaternary structure, part of the 50S ribosomal subunit.

It is found in the plastid. Its subcellular location is the chloroplast. In terms of biological role, binds to 23S rRNA. The polypeptide is Large ribosomal subunit protein uL23c (rpl23) (Physcomitrium patens (Spreading-leaved earth moss)).